We begin with the raw amino-acid sequence, 1025 residues long: Multidrug resistance protein MdtC (1025 aa).

12 consecutive transmembrane segments (helical) span residues 3 to 23 (FFAL…AITL), 333 to 353 (EVEQ…FLFL), 360 to 380 (IIPA…MYLC), 387 to 407 (LSLM…IVVL), 431 to 451 (VGFT…PLLL), 463 to 483 (FAVT…TLTP), 528 to 548 (LVGV…ISIP), 853 to 873 (VILI…LYES), 875 to 895 (VHPL…LLAL), 897 to 917 (LFNA…IGIV), 953 to 973 (PIMM…LSGG), and 984 to 1004 (ITIV…TPVV).

Belongs to the resistance-nodulation-cell division (RND) (TC 2.A.6) family. MdtC subfamily. Part of a tripartite efflux system composed of MdtA, MdtB and MdtC. MdtC forms a heteromultimer with MdtB.

The protein localises to the cell inner membrane. Functionally, the MdtABC tripartite complex confers resistance against novobiocin and deoxycholate. The chain is Multidrug resistance protein MdtC from Escherichia coli (strain SMS-3-5 / SECEC).